Consider the following 162-residue polypeptide: Shikimate kinase (162 aa).

Position 11 to 16 (11 to 16 (GSGKSS)) interacts with ATP. Serine 15 provides a ligand contact to Mg(2+). Substrate is bound by residues aspartate 33, arginine 57, and glycine 80. Position 116 (arginine 116) interacts with ATP. Arginine 132 is a binding site for substrate.

The protein belongs to the shikimate kinase family. In terms of assembly, monomer. It depends on Mg(2+) as a cofactor.

Its subcellular location is the cytoplasm. The catalysed reaction is shikimate + ATP = 3-phosphoshikimate + ADP + H(+). The protein operates within metabolic intermediate biosynthesis; chorismate biosynthesis; chorismate from D-erythrose 4-phosphate and phosphoenolpyruvate: step 5/7. In terms of biological role, catalyzes the specific phosphorylation of the 3-hydroxyl group of shikimic acid using ATP as a cosubstrate. This Helicobacter pylori (strain G27) protein is Shikimate kinase.